The sequence spans 550 residues: MSEQSTLAGPYTEKPGVESQNPTGDGKASFDETSPRDIHGWRWAIAYAAMLSTTFLFALDNTIVANIQPSIINDFGHLELISWIGTGFALGTMFILLWGKIYGVFNIKWVYIFNILLFEVGSAVCGAAPNIQALIIGRVIAGIGGSGMYSGTLTYVSVLSNQKEKPAYLAGSTVVWGVGSVVGPVVGGAFAASSATWRWGFYINLPIGAVFAPAYMILFPNWDPNPTLTLAEKFRLVDWINAVIFLAGSACLTVALTFGGVVYSFNSGTIIALWTVTGVLLVAFIVLLKLHPLVSKENRLYPLHFFKQMTLINMQLQVFLASGIILAMTYYVPLYFQFIKGDGALQAGVRLLPLIMFMVAFSMVNGFLMPKYGLIPIWYIVGSALTLIGSALMYTIDENTSNGNVYGYNILVGAGAGCYIVAGFAIVQSLVPTHEIANAVGAMTISQDLGMVLFLAICGSLFHNVAVDKVGKALPSASETEIGNLIAGTSSSAFQALSEADKDLVIPEIASAMKSIWAFFMAAAALSFVCSWPLFKTKLGGKKVEASVVV.

Residues 1–33 are disordered; that stretch reads MSEQSTLAGPYTEKPGVESQNPTGDGKASFDET. Helical transmembrane passes span 44 to 64, 78 to 98, 109 to 129, 139 to 159, 172 to 192, 199 to 219, 242 to 262, 268 to 288, 319 to 339, 351 to 371, and 373 to 393; these read AIAY…NTIV, LELI…ILLW, WVYI…GAAP, VIAG…VSVL, STVV…AFAA, WGFY…MILF, AVIF…GGVV, GTII…IVLL, FLAS…FQFI, LLPL…LMPK, and GLIP…SALM. A glycan (N-linked (GlcNAc...) asparagine) is linked at Asn399. 3 helical membrane-spanning segments follow: residues 410–430, 439–459, and 515–535; these read ILVG…VQSL, AVGA…AICG, and SIWA…WPLF.

The protein belongs to the major facilitator superfamily. TCR/Tet family.

Its subcellular location is the cell membrane. Efflux pump; part of the gene cluster that mediates the biosynthesis of depudecin, a highly oxidized eleven-carbon linear polyketide that acts as a histone deacetylase (HDAC) inhibitor and makes a small contribution to pathogenesis. Is presumed either to be responsible for exporting depudecin, to provide self-protection, or both. In Fusarium langsethiae, this protein is Efflux pump DEP3.